The chain runs to 443 residues: Ribosomal protein uS12 methylthiotransferase RimO (443 aa).

The region spanning 5 to 116 is the MTTase N-terminal domain; sequence PTIAINHLGC…IVDIIRRTEQ (112 aa). Residues Cys14, Cys50, Cys79, Cys154, Cys158, and Cys161 each contribute to the [4Fe-4S] cluster site. The 230-residue stretch at 140–369 folds into the Radical SAM core domain; that stretch reads TTNEAIAYLR…MALQQPISAQ (230 aa). Residues 372–438 form the TRAM domain; it reads AACLGQTLDV…DYDLYGMTAE (67 aa).

The protein belongs to the methylthiotransferase family. RimO subfamily. The cofactor is [4Fe-4S] cluster.

It is found in the cytoplasm. The enzyme catalyses L-aspartate(89)-[ribosomal protein uS12]-hydrogen + (sulfur carrier)-SH + AH2 + 2 S-adenosyl-L-methionine = 3-methylsulfanyl-L-aspartate(89)-[ribosomal protein uS12]-hydrogen + (sulfur carrier)-H + 5'-deoxyadenosine + L-methionine + A + S-adenosyl-L-homocysteine + 2 H(+). Its function is as follows. Catalyzes the methylthiolation of an aspartic acid residue of ribosomal protein uS12. The polypeptide is Ribosomal protein uS12 methylthiotransferase RimO (Synechocystis sp. (strain ATCC 27184 / PCC 6803 / Kazusa)).